We begin with the raw amino-acid sequence, 61 residues long: Bowman-Birk type proteinase inhibitor B5 (61 aa).

Disulfide bonds link cysteine 5–cysteine 60, cysteine 6–cysteine 22, cysteine 9–cysteine 56, cysteine 12–cysteine 20, cysteine 29–cysteine 36, and cysteine 33–cysteine 48.

The protein belongs to the Bowman-Birk serine protease inhibitor family. As to expression, expressed in bulb (at protein level).

Functionally, serine protease inhibitor. Inhibits trypsin (Ki = 41 nM) and weakly inhibits chymotrypsin (Ki = 410 nM). Does not inhibit bacterial subtilisin. The protein is Bowman-Birk type proteinase inhibitor B5 of Hyacinthus orientalis (Common hyacinth).